A 158-amino-acid chain; its full sequence is Ribosome maturation factor RimP (158 aa).

It belongs to the RimP family.

Its subcellular location is the cytoplasm. In terms of biological role, required for maturation of 30S ribosomal subunits. The protein is Ribosome maturation factor RimP of Pediococcus pentosaceus (strain ATCC 25745 / CCUG 21536 / LMG 10740 / 183-1w).